The chain runs to 354 residues: Methylthioribose-1-phosphate isomerase (354 aa).

Residues arginine 45–alanine 47, arginine 87, and glutamine 204 each bind substrate. Aspartate 245 functions as the Proton donor in the catalytic mechanism. Substrate is bound at residue asparagine 255 to lysine 256.

The protein belongs to the eIF-2B alpha/beta/delta subunits family. MtnA subfamily.

It catalyses the reaction 5-(methylsulfanyl)-alpha-D-ribose 1-phosphate = 5-(methylsulfanyl)-D-ribulose 1-phosphate. The protein operates within amino-acid biosynthesis; L-methionine biosynthesis via salvage pathway; L-methionine from S-methyl-5-thio-alpha-D-ribose 1-phosphate: step 1/6. In terms of biological role, catalyzes the interconversion of methylthioribose-1-phosphate (MTR-1-P) into methylthioribulose-1-phosphate (MTRu-1-P). In Chlorobaculum tepidum (strain ATCC 49652 / DSM 12025 / NBRC 103806 / TLS) (Chlorobium tepidum), this protein is Methylthioribose-1-phosphate isomerase.